We begin with the raw amino-acid sequence, 504 residues long: L-amino-acid oxidase (504 aa).

Residues Met1 to Cys18 form the signal peptide. A disulfide bridge connects residues Cys28 and Cys191. FAD is bound by residues Met61 to Ser62, Glu81 to Ala82, Arg89, and Gly105 to Arg108. Substrate is bound at residue Arg108. An N-linked (GlcNAc...) asparagine glycan is attached at Asn190. Substrate is bound at residue His241. Val279 lines the FAD pocket. The cysteines at positions 349 and 430 are disulfide-linked. A glycan (N-linked (GlcNAc...) asparagine) is linked at Asn379. Tyr390 lines the substrate pocket. FAD is bound by residues Glu475 and Gly482–Thr487. Substrate is bound at residue Gly482 to Trp483.

This sequence belongs to the flavin monoamine oxidase family. FIG1 subfamily. As to quaternary structure, homodimer; non-covalently linked. FAD serves as cofactor. As to expression, expressed by the venom gland.

Its subcellular location is the secreted. It carries out the reaction an L-alpha-amino acid + O2 + H2O = a 2-oxocarboxylate + H2O2 + NH4(+). It catalyses the reaction L-leucine + O2 + H2O = 4-methyl-2-oxopentanoate + H2O2 + NH4(+). The enzyme catalyses L-phenylalanine + O2 + H2O = 3-phenylpyruvate + H2O2 + NH4(+). The catalysed reaction is L-tryptophan + O2 + H2O = indole-3-pyruvate + H2O2 + NH4(+). It carries out the reaction L-methionine + O2 + H2O = 4-methylsulfanyl-2-oxobutanoate + H2O2 + NH4(+). It catalyses the reaction L-tyrosine + O2 + H2O = 3-(4-hydroxyphenyl)pyruvate + H2O2 + NH4(+). Catalyzes an oxidative deamination of predominantly hydrophobic and aromatic L-amino acids, thus producing hydrogen peroxide that may contribute to the diverse toxic effects of this enzyme. Is highly active on L-Tyr followed by L-Phe, L-Met, L-Leu, L-Trp, and weakly active on L-Ile, L-Arg, L-Val, L-Lys, and L-Ala. Inhibits ADP- and collagen-induced platelet aggregation. This inhibition is inhibited by catalase, indicating the importance of generated H(2)O(2) for the inhibitory effect. This effect on platelets among snake L-amino-acid oxidases is however controversial, since some of them induce aggregation, whereas the other inhibit agonist-induced aggregation. In vivo, this enzyme induces a rapid, substantial and reversible increase in the paw volume of mice (edema). In addition, myofibrosis, and inflammatory cell infiltration on the paw tissue are also observed. The chain is L-amino-acid oxidase from Daboia russelii (Russel's viper).